The following is a 740-amino-acid chain: Elongation factor 2 (740 aa).

One can recognise a tr-type G domain in the interval 23-264; the sequence is AQIRNAGTLA…MIIEHVPPPN (242 aa). Residues 32–39, 98–102, and 152–155 contribute to the GTP site; these read AHVDHGKT, DTPGH, and NKID. H605 is modified (diphthamide).

Belongs to the TRAFAC class translation factor GTPase superfamily. Classic translation factor GTPase family. EF-G/EF-2 subfamily.

Its subcellular location is the cytoplasm. Functionally, catalyzes the GTP-dependent ribosomal translocation step during translation elongation. During this step, the ribosome changes from the pre-translocational (PRE) to the post-translocational (POST) state as the newly formed A-site-bound peptidyl-tRNA and P-site-bound deacylated tRNA move to the P and E sites, respectively. Catalyzes the coordinated movement of the two tRNA molecules, the mRNA and conformational changes in the ribosome. The chain is Elongation factor 2 from Pyrobaculum calidifontis (strain DSM 21063 / JCM 11548 / VA1).